A 514-amino-acid chain; its full sequence is MESQSKKSSALKTLSSLWNGSSSATSDPVTVLDRSRTHHHRGRSTSSKAQPFRLDDSVYSDQPPKDHISLARSITRPESASESKIYAPSARSSLSLEAVVGKKVSAKFAKYLSQTDDDWGVSNIKASKSLPRMARSTTPNSSSRSLFPQNGVDTTTSRQKLHSSGRFPLPAKLAHRSVEVEVAESNALVSRIKKFSRILDAPIVDLNALRTLAWNGIPSEHRPIVWKYLLGYLPCNASRREVTLKRKRDEYNAAKDSCFNTNTEPPPLDQTIWRQIVLDVPRTNPSILLYQNPLTQRMLERILYVWASRHPASGYVQGISDLVTPFIQVFLSEYIGDKDPMTYDIALLDETNRNDIEADAYWCLSKLLDGIQDNYIHAQPGIRRQVNNLRELTLRIDEPLVKHLQMEGVDFLQFSFRWMNCLLMRELSISNIIRMWDTYMAEGVQGFSEFHLYVCAAFLVKWSSELQKMEFQDILIFLQSIPTKDWSTKDIEILLSEAFLWKSLYSGAGAHLKR.

Disordered stretches follow at residues 17-65 (LWNG…QPPK) and 130-164 (LPRMARSTTPNSSSRSLFPQNGVDTTTSRQKLHSS). Composition is skewed to polar residues over residues 18-28 (WNGSSSATSDP) and 135-158 (RSTTPNSSSRSLFPQNGVDTTTSR). One can recognise a Rab-GAP TBC domain in the interval 216–443 (GIPSEHRPIV…RMWDTYMAEG (228 aa)).

The protein resides in the golgi apparatus. It is found in the golgi stack. Its subcellular location is the cytoplasm. It localises to the nucleus. Stimulates specifically the GTPase activity of ypt1. Functions on the Golgi as a negative regulator of ypt1. This is GTPase-activating protein gyp1 from Schizosaccharomyces pombe (strain 972 / ATCC 24843) (Fission yeast).